An 813-amino-acid chain; its full sequence is Serine/threonine-protein kinase kin-29 (813 aa).

The 252-residue stretch at 18 to 269 folds into the Protein kinase domain; sequence YDVGRAIGKG…IQNVLAHRWM (252 aa). ATP contacts are provided by residues 24 to 32 and lysine 47; that span reads IGKGNFATV. Aspartate 140 acts as the Proton acceptor in catalysis. The disordered stretch occupies residues 383-412; it reads LSSPDCDSDDSSNSDLCDESPLSSLEPNHK. The span at 388-400 shows a compositional bias: acidic residues; sequence CDSDDSSNSDLCD.

Belongs to the protein kinase superfamily. CAMK Ser/Thr protein kinase family. SNF1 subfamily. As to quaternary structure, interacts with tax-6. It depends on Mg(2+) as a cofactor. Post-translationally, autophosphorylated. Elevated cAMP levels appears to act via PKA to directly or indirectly phosphorylate multiple sites on kin-29 and inhibit function.

The protein resides in the cytoplasm. The protein localises to the nucleus. The catalysed reaction is L-seryl-[protein] + ATP = O-phospho-L-seryl-[protein] + ADP + H(+). It catalyses the reaction L-threonyl-[protein] + ATP = O-phospho-L-threonyl-[protein] + ADP + H(+). Regulates chemoreceptor expression by phosphorylating the hda-4 class II histone deacetylase (HDAC) and inhibiting the gene repression functions of hda-4 and the mef-2 transcription factor, enabling the correct sensing and transduction of food signals. Role in determining body size, the dauer decision and serotonin-mediated egg laying. May modulate the Sma/Mab pathway and regulates development in the later larval stages. The sequence is that of Serine/threonine-protein kinase kin-29 from Caenorhabditis briggsae.